We begin with the raw amino-acid sequence, 100 residues long: Nucleoid-associated protein Caur_0522 (100 aa).

Belongs to the YbaB/EbfC family. As to quaternary structure, homodimer.

The protein resides in the cytoplasm. Its subcellular location is the nucleoid. Functionally, binds to DNA and alters its conformation. May be involved in regulation of gene expression, nucleoid organization and DNA protection. The protein is Nucleoid-associated protein Caur_0522 of Chloroflexus aurantiacus (strain ATCC 29366 / DSM 635 / J-10-fl).